We begin with the raw amino-acid sequence, 219 residues long: MSKATPRRRRWRIGELAEATGVTVRTLHHYEHTGLLAASERTDGGHRMYDRESVQRVHQIRALRELGFSLHEIRKAMEGTTSLIDLLRKHLERIELQVARATLLRDRLRDMTTGSEIQVSVDELPATLDAMSKVQTRSQTSRCTCKLAIEREERWRRIRDELRDCMDRGEHPCGERAKAVAVAARLLISEIAGADSRVSTILKVLARLSAPRSLAGWDP.

The region spanning 10-79 (RWRIGELAEA…LHEIRKAMEG (70 aa)) is the HTH merR-type domain. The H-T-H motif DNA-binding region spans 13–32 (IGELAEATGVTVRTLHHYEH).

Involved in genotype-specific nodulation of soybeans. The sequence is that of Nodulation protein NolA (nolA) from Bradyrhizobium elkanii.